The chain runs to 885 residues: DNA mismatch repair protein MutS (885 aa).

An ATP-binding site is contributed by 626–633 (GPNMGGKS).

This sequence belongs to the DNA mismatch repair MutS family.

This protein is involved in the repair of mismatches in DNA. It is possible that it carries out the mismatch recognition step. This protein has a weak ATPase activity. The sequence is that of DNA mismatch repair protein MutS from Burkholderia cenocepacia (strain HI2424).